We begin with the raw amino-acid sequence, 518 residues long: MSDYLLQMNGIVKTFDGVKALNGIDIKVRPGECVGLCGENGTGKSTLMKVLSAVYPYGTWDGEILWDGTPLKAQSISETEAAGIVIIHQELTLVPDLSVAENIFMGHELTLPGGRMNYPAMIHRAEVLMRELKVPDMNVALPVSQYGGGYQQLVEIAKALNKKARLLILDEPSSALTRSEIEVLLDIIRDLKAKGVACVYISHKLDEVAAVCDTISVIRDGKHIATTAMSDMDIPKIITQMVGREMSNLYPTEPHEIGEVIFEARNITCYDVDNPGRKRVDDISFALKRGEILGIAGLVGAGRTELVSALFGAYPGRYTGEVWLDGQPVDTRTPLKSIRAGLCMVPEDRKRQGIIPDLGVGQNITLAVLDTYSKMTRIDAEAELGSIDREISRMHLKTASPFLPITSLSGGNQQKAVLAKMLLTRPRVLILDEPTRGVDVGAKYEIYKLMGALAAEGVSIIMVSSELAEVLGVSDRVLVIGEGQLRGDFINHELTQEQVLAAALSHPDAPDNNARKTA.

ABC transporter domains are found at residues 6 to 245 and 262 to 507; these read LQMN…VGRE and FEAR…LSHP. Position 38 to 45 (38 to 45) interacts with ATP; that stretch reads GENGTGKS.

This sequence belongs to the ABC transporter superfamily. Xylose importer (TC 3.A.1.2.4) family. In terms of assembly, the complex is composed of two ATP-binding proteins (XylG), two transmembrane proteins (XylH) and a solute-binding protein (XylF).

It localises to the cell inner membrane. It catalyses the reaction D-xylose(out) + ATP + H2O = D-xylose(in) + ADP + phosphate + H(+). Part of the ABC transporter complex XylFGH involved in xylose import. Responsible for energy coupling to the transport system. The sequence is that of Xylose import ATP-binding protein XylG from Pseudomonas savastanoi pv. phaseolicola (strain 1448A / Race 6) (Pseudomonas syringae pv. phaseolicola (strain 1448A / Race 6)).